A 493-amino-acid chain; its full sequence is Tripartite motif-containing protein 5 (493 aa).

The residue at position 2 (A2) is an N-acetylalanine. Residues 15 to 59 (CPICLELLTQPLSLDCGHSFCQACLTANHKKSMLDKGESSCPVCR) form an RING-type zinc finger. S86 carries the post-translational modification Phosphoserine. The segment at 90 to 132 (QKVDHCAHHGEKLLLFCQEDGKVICWLCERSQEHRGHHTFLTE) adopts a B box-type zinc-finger fold. Zn(2+)-binding residues include C95, H98, C117, and H123. Positions 131 to 240 (TEEVAREYQV…LISDLERRLQ (110 aa)) form a coiled coil. A required for interaction with GABARAP and for autophagy region spans residues 185–198 (FEQLRDILDWEESN). One can recognise a B30.2/SPRY domain in the interval 281 to 493 (LKGMLEVFRE…VPMTLCSPSS (213 aa)).

This sequence belongs to the TRIM/RBCC family. Can form homodimers and homotrimers. In addition to lower-order dimerization, also exhibits a higher-order multimerization and both low- and high-order multimerizations are essential for its restriction activity. Interacts with BTBD1 and BTBD2. Interacts with PSMC4, PSMC5, PSMD7 and HSPA8/HSC70. Interacts (via B30.2/SPRY domain) with HSPA1A/B. Interacts with PSMC2, MAP3K7/TAK1, TAB2 and TAB3. Interacts with SQSTM1. Interacts with TRIM6 and TRIM34. Interacts with ULK1 (phosphorylated form), GABARAP, GABARAPL1, GABARAPL2, MAP1LC3A, MAP1LC3C and BECN1. Degraded in a proteasome-independent fashion in the absence of viral infection but in a proteasome-dependent fashion following exposure to restriction sensitive virus. Post-translationally, autoubiquitinated in a RING finger- and UBE2D2-dependent manner. Monoubiquitinated by TRIM21. Deubiquitinated by Yersinia YopJ. Ubiquitination may not lead to proteasomal degradation.

The protein resides in the cytoplasm. It is found in the nucleus. It catalyses the reaction S-ubiquitinyl-[E2 ubiquitin-conjugating enzyme]-L-cysteine + [acceptor protein]-L-lysine = [E2 ubiquitin-conjugating enzyme]-L-cysteine + N(6)-ubiquitinyl-[acceptor protein]-L-lysine.. Its pathway is protein modification; protein ubiquitination. Its function is as follows. Capsid-specific restriction factor that prevents infection from non-host-adapted retroviruses. Blocks viral replication early in the life cycle, after viral entry but before reverse transcription. In addition to acting as a capsid-specific restriction factor, also acts as a pattern recognition receptor that activates innate immune signaling in response to the retroviral capsid lattice. Binding to the viral capsid triggers its E3 ubiquitin ligase activity, and in concert with the heterodimeric ubiquitin conjugating enzyme complex UBE2V1-UBE2N (also known as UBC13-UEV1A complex) generates 'Lys-63'-linked polyubiquitin chains, which in turn are catalysts in the autophosphorylation of the MAP3K7/TAK1 complex (includes TAK1, TAB2, and TAB3). Activation of the MAP3K7/TAK1 complex by autophosphorylation results in the induction and expression of NF-kappa-B and MAPK-responsive inflammatory genes, thereby leading to an innate immune response in the infected cell. Plays a role in regulating autophagy through activation of autophagy regulator BECN1 by causing its dissociation from its inhibitors BCL2 and TAB2. This chain is Tripartite motif-containing protein 5 (TRIM5), found in Pan troglodytes (Chimpanzee).